Consider the following 126-residue polypeptide: Aspartate 1-decarboxylase (126 aa).

Catalysis depends on serine 25, which acts as the Schiff-base intermediate with substrate; via pyruvic acid. Serine 25 is modified (pyruvic acid (Ser)). Threonine 57 is a substrate binding site. The active-site Proton donor is the tyrosine 58. 73–75 is a binding site for substrate; sequence GAA.

It belongs to the PanD family. Heterooctamer of four alpha and four beta subunits. Pyruvate is required as a cofactor. Is synthesized initially as an inactive proenzyme, which is activated by self-cleavage at a specific serine bond to produce a beta-subunit with a hydroxyl group at its C-terminus and an alpha-subunit with a pyruvoyl group at its N-terminus.

The protein resides in the cytoplasm. It catalyses the reaction L-aspartate + H(+) = beta-alanine + CO2. It participates in cofactor biosynthesis; (R)-pantothenate biosynthesis; beta-alanine from L-aspartate: step 1/1. Catalyzes the pyruvoyl-dependent decarboxylation of aspartate to produce beta-alanine. In Pseudomonas aeruginosa (strain LESB58), this protein is Aspartate 1-decarboxylase.